We begin with the raw amino-acid sequence, 349 residues long: Protein DMR6-LIKE OXYGENASE 1 (349 aa).

In terms of domain architecture, Fe2OG dioxygenase spans 197-296 (HAQHMAFNYY…RLSIPTFYFP (100 aa)). Position 206 (Y206) interacts with 2-oxoglutarate. Fe cation contacts are provided by H221, D223, and H277. 2-oxoglutarate-binding residues include R287 and S289.

Belongs to the iron/ascorbate-dependent oxidoreductase family. It depends on L-ascorbate as a cofactor. Fe(2+) serves as cofactor.

The catalysed reaction is salicylate + NADH + O2 + H(+) = 2,3-dihydroxybenzoate + NAD(+) + H2O. Functionally, converts salicylic acid (SA) to both 2,3-dihydroxybenzoic acid (2,3-DHBA) and 2,5-DHBA in vitro but only 2,3-DHBA in vivo. Component of a negative feedback regulation system of SA levels during senescence. Regulates both onset and progression of leaf senescence. Negative regulator of defense against Hyaloperonospora arabidopsidis. In terms of biological role, (Microbial infection) Confers susceptibility to the downy mildew pathogen Hyaloperonospora arabidopsidis. This chain is Protein DMR6-LIKE OXYGENASE 1, found in Arabidopsis thaliana (Mouse-ear cress).